A 187-amino-acid polypeptide reads, in one-letter code: Ion-translocating oxidoreductase complex subunit B (187 aa).

Residues 1 to 23 (MIAAAASMSALGLGLGYLLGAAA) form a hydrophobic region. The region spanning 29–88 (ETPPIVEEIAKILPGTNCGACGFPGCNGLAEAMAEGNAPVTACTPGGRDVALALAEIVTV) is the 4Fe-4S domain. Residues cysteine 46, cysteine 49, cysteine 54, cysteine 71, cysteine 112, cysteine 115, cysteine 118, cysteine 122, cysteine 142, cysteine 145, cysteine 148, and cysteine 152 each contribute to the [4Fe-4S] cluster site. 4Fe-4S ferredoxin-type domains follow at residues 103-132 (MVAFVFEDHCTGCQKCFKRCPTDAIVGGAK) and 133-162 (QIHTVVMDACIGCDACIEVCPTEAIVSRVK).

Belongs to the 4Fe4S bacterial-type ferredoxin family. RnfB subfamily. As to quaternary structure, the complex is composed of six subunits: RnfA, RnfB, RnfC, RnfD, RnfE and RnfG. The cofactor is [4Fe-4S] cluster.

It is found in the cellular chromatophore membrane. Its function is as follows. Part of a membrane-bound complex that couples electron transfer with translocation of ions across the membrane. Required for nitrogen fixation. Involved in electron transfer to nitrogenase. The protein is Ion-translocating oxidoreductase complex subunit B of Rhodobacter capsulatus (Rhodopseudomonas capsulata).